The sequence spans 163 residues: Photosystem II extrinsic protein V (163 aa).

The N-terminal stretch at 1–26 is a signal peptide; the sequence is MFRRLIGVVVATVLLTFQLIVGSATA. Heme c-binding residues include Cys63, Cys66, His67, and His118.

The protein belongs to the cytochrome c family. PsbV subfamily. In terms of assembly, PSII is composed of 1 copy each of membrane proteins PsbA, PsbB, PsbC, PsbD, PsbE, PsbF, PsbH, PsbI, PsbJ, PsbK, PsbL, PsbM, PsbT, PsbX, PsbY, PsbZ, Psb30/Ycf12, peripheral proteins PsbO, CyanoQ (PsbQ), PsbU, PsbV and a large number of cofactors. It forms dimeric complexes. The cofactor is heme c.

The protein localises to the cellular thylakoid membrane. In terms of biological role, one of the extrinsic, lumenal subunits of photosystem II (PSII). PSII is a light-driven water plastoquinone oxidoreductase, using light energy to abstract electrons from H(2)O, generating a proton gradient subsequently used for ATP formation. The extrinsic proteins stabilize the structure of photosystem II oxygen-evolving complex (OEC), the ion environment of oxygen evolution and protect the OEC against heat-induced inactivation. Low-potential cytochrome c that plays a role in the OEC of PSII. This is Photosystem II extrinsic protein V from Trichormus variabilis (strain ATCC 29413 / PCC 7937) (Anabaena variabilis).